A 630-amino-acid chain; its full sequence is Long-chain-fatty-acid--AMP ligase FadD32 (630 aa).

Residues 187–192, S342, A346, D469, and R483 contribute to the ATP site; that span reads TSGSTR.

The protein belongs to the ATP-dependent AMP-binding enzyme family. In terms of assembly, monomer.

The catalysed reaction is a long-chain fatty acid + holo-[ACP] + ATP = a long-chain fatty acyl-[ACP] + AMP + diphosphate. The enzyme catalyses decanoate + ATP + H(+) = decanoyl-AMP + diphosphate. It carries out the reaction dodecanoate + ATP + H(+) = dodecanoyl-AMP + diphosphate. It catalyses the reaction tetradecanoate + ATP + H(+) = tetradecanoyl-AMP + diphosphate. Its pathway is lipid metabolism; mycolic acid biosynthesis. Its activity is regulated as follows. The acyl-AMP ligase activity is inhibited by the alkylphosphate ester of AMP, adenosine 50-dodecylphosphate (AMPC12). Also inhibited by eicosyl-AMP (AMPC20). In terms of biological role, involved in the biosynthesis of mycolic acids. Catalyzes the activation of long-chain fatty acids as acyl-adenylates (acyl-AMP), which are then transferred to the phosphopantetheine arm of the polyketide synthase Pks13 for further chain extension. Can use decanoate (C10), dodecanoate (C12) and tetradecanoate (C14). The sequence is that of Long-chain-fatty-acid--AMP ligase FadD32 from Mycolicibacterium smegmatis (strain ATCC 700084 / mc(2)155) (Mycobacterium smegmatis).